The following is a 1070-amino-acid chain: DNA-directed RNA polymerase subunit beta (1070 aa).

The protein belongs to the RNA polymerase beta chain family. In plastids the minimal PEP RNA polymerase catalytic core is composed of four subunits: alpha, beta, beta', and beta''. When a (nuclear-encoded) sigma factor is associated with the core the holoenzyme is formed, which can initiate transcription.

It localises to the plastid. The protein resides in the chloroplast. The catalysed reaction is RNA(n) + a ribonucleoside 5'-triphosphate = RNA(n+1) + diphosphate. In terms of biological role, DNA-dependent RNA polymerase catalyzes the transcription of DNA into RNA using the four ribonucleoside triphosphates as substrates. This Morus indica (Mulberry) protein is DNA-directed RNA polymerase subunit beta.